Here is a 138-residue protein sequence, read N- to C-terminus: Small ribosomal subunit protein uS11c (138 aa).

The disordered stretch occupies residues 1 to 21; it reads MAKSIPKIGSRKTGRIGSRKH. The span at 9-21 shows a compositional bias: basic residues; sequence GSRKTGRIGSRKH.

This sequence belongs to the universal ribosomal protein uS11 family. As to quaternary structure, part of the 30S ribosomal subunit.

It localises to the plastid. It is found in the chloroplast. This is Small ribosomal subunit protein uS11c from Pisum sativum (Garden pea).